The following is a 68-amino-acid chain: Large ribosomal subunit protein uL29 (68 aa).

Belongs to the universal ribosomal protein uL29 family.

The protein is Large ribosomal subunit protein uL29 (rpl29) of Pyrococcus horikoshii (strain ATCC 700860 / DSM 12428 / JCM 9974 / NBRC 100139 / OT-3).